The chain runs to 508 residues: Photosystem II CP47 reaction center protein (508 aa).

A run of 6 helical transmembrane segments spans residues 21–36 (AVHL…WAGS), 101–115 (IVLS…VWHW), 140–156 (GIHL…FGAF), 203–218 (IAAG…FHLT), 237–252 (VLSS…AFVV), and 457–472 (SFAL…HGSR).

This sequence belongs to the PsbB/PsbC family. PsbB subfamily. PSII is composed of 1 copy each of membrane proteins PsbA, PsbB, PsbC, PsbD, PsbE, PsbF, PsbH, PsbI, PsbJ, PsbK, PsbL, PsbM, PsbT, PsbX, PsbY, PsbZ, Psb30/Ycf12, peripheral proteins PsbO, CyanoQ (PsbQ), PsbU, PsbV and a large number of cofactors. It forms dimeric complexes. Requires Binds multiple chlorophylls. PSII binds additional chlorophylls, carotenoids and specific lipids. as cofactor.

The protein resides in the cellular thylakoid membrane. In terms of biological role, one of the components of the core complex of photosystem II (PSII). It binds chlorophyll and helps catalyze the primary light-induced photochemical processes of PSII. PSII is a light-driven water:plastoquinone oxidoreductase, using light energy to abstract electrons from H(2)O, generating O(2) and a proton gradient subsequently used for ATP formation. This chain is Photosystem II CP47 reaction center protein, found in Synechococcus elongatus (strain ATCC 33912 / PCC 7942 / FACHB-805) (Anacystis nidulans R2).